The following is a 418-amino-acid chain: ORC1-type DNA replication protein 2 (418 aa).

ATP contacts are provided by residues 72-76 (TGKTV), tyrosine 218, and arginine 230.

It belongs to the CDC6/cdc18 family.

Involved in regulation of DNA replication. The sequence is that of ORC1-type DNA replication protein 2 (cdc6-2) from Sulfurisphaera tokodaii (strain DSM 16993 / JCM 10545 / NBRC 100140 / 7) (Sulfolobus tokodaii).